We begin with the raw amino-acid sequence, 91 residues long: MLTGYSLRFLKEALTIHHGDINPPALNGSPCRLNEPDVCQLILDEFKLITVIGDGFTCQWVLKTHHIHRLFFYFVVFCDINHINIVPIIIP.

This is Putative protein p22 (22) from Escherichia coli (Bacteriophage APSE-1).